The primary structure comprises 572 residues: Proline--tRNA ligase (572 aa).

This sequence belongs to the class-II aminoacyl-tRNA synthetase family. ProS type 1 subfamily. Homodimer.

The protein resides in the cytoplasm. The enzyme catalyses tRNA(Pro) + L-proline + ATP = L-prolyl-tRNA(Pro) + AMP + diphosphate. Catalyzes the attachment of proline to tRNA(Pro) in a two-step reaction: proline is first activated by ATP to form Pro-AMP and then transferred to the acceptor end of tRNA(Pro). As ProRS can inadvertently accommodate and process non-cognate amino acids such as alanine and cysteine, to avoid such errors it has two additional distinct editing activities against alanine. One activity is designated as 'pretransfer' editing and involves the tRNA(Pro)-independent hydrolysis of activated Ala-AMP. The other activity is designated 'posttransfer' editing and involves deacylation of mischarged Ala-tRNA(Pro). The misacylated Cys-tRNA(Pro) is not edited by ProRS. This is Proline--tRNA ligase from Escherichia coli O127:H6 (strain E2348/69 / EPEC).